The chain runs to 146 residues: Ninjurin-1 (146 aa).

The segment at 1-33 (MASEAMELNGGVNRRDDPGARPQQGRMSRNTPL) is disordered. Over 1–75 (MASEAMELNG…ELGPSFSFYI (75 aa)) the chain is Extracellular. The tract at residues 37 to 66 (HYANKKSAAESMLDIALLMANASQLKTVLE) is required to induce plasma membrane rupture. A helix alpha1 region spans residues 41-52 (KKSAAESMLDIA). The segment at 55 to 71 (MANASQLKTVLELGPSF) is helix alpha2. N57 is a glycosylation site (N-linked (GlcNAc...) asparagine). A helical membrane pass occupies residues 76–100 (PLITLISISLTLQIIVGILLIFIVK). Topologically, residues 101 to 110 (WNLNDSSKHY) are cytoplasmic. A helical membrane pass occupies residues 111 to 135 (ILNLLENIVTALVFIVVVVNVFITA). Residues 136 to 146 (FGVQRPDDKTS) lie on the Extracellular side of the membrane.

The protein belongs to the ninjurin family. In terms of assembly, homooligomer; in response to death stimuli, homooligomerizes into long, highly branched filaments and large, ring-shaped structures in the membrane. Homodimer; in absence of death stimuli, forms an inactive homodimer. Homooligomer; in response to death stimuli, homooligomerizes into long, highly branched filaments and large, ring-shaped structures in the membrane.

The protein resides in the cell membrane. It is found in the synaptic cell membrane. Its activity is regulated as follows. In normal conditions, NINJ1 is inactivated. In response to death stimuli, homooligomerizes and disrupts membrane integrity by introducing the hydrophilic faces of alpha1 and alpha2 helices into the hydrophobic membrane. Homooligomerization and ability to mediate plasma membrane rupture is inhibited by glycine; it is unclear whether glycine directly or indirectly inhibits homooligomerization. In response to death stimuli, homooligomerizes and disrupts membrane integrity by introducing the hydrophilic faces of alpha1 and alpha2 helices into the hydrophobic membrane. Homooligomerization and ability to mediate plasma membrane rupture is inhibited by glycine; it is unclear whether glycine directly or indirectly inhibits homooligomerization. In normal conditions, NINJ1 is autoinhibited via formation of a homodimer: in the inactive homodimer, the alpha1 and alpha2 helices (residues 41-71) form a single transmembrane region without a kink, in which hydrophilic faces of alpha1 and alpha2 helices are sequestered. Functionally, effector of various programmed cell death, such as pyroptosis and necroptosis, which mediates plasma membrane rupture (cytolysis). Oligomerizes in response to death stimuli and forms ring-like structures on the plasma membrane: acts by cutting and shedding membrane disks, like a cookie cutter, leading to membrane damage and loss that cannot be repaired by the cell. Plasma membrane rupture leads to release intracellular molecules named damage-associated molecular patterns (DAMPs) that propagate the inflammatory response. Mechanistically, mediates plasma membrane rupture by introducing hydrophilic faces of 2 alpha helices into the hydrophobic membrane. Induces plasma membrane rupture downstream of Gasdermin (GSDMA, GSDMB, GSDMC, GSDMD, or GSDME) or MLKL during pyroptosis or necroptosis, respectively. Also acts as an effector of PANoptosis and ferroptosis. Induces plasma membrane rupture in response to cell swelling caused by osmotic stress. Acts as a regulator of Toll-like receptor 4 (TLR4) signaling triggered by lipopolysaccharide (LPS) during systemic inflammation; directly binds LPS. Involved in leukocyte migration during inflammation by promoting transendothelial migration of macrophages via homotypic binding. Promotes the migration of monocytes across the brain endothelium to central nervous system inflammatory lesions. Also acts as a homophilic transmembrane adhesion molecule involved in various processes such as axonal growth, cell chemotaxis and angiogenesis. Promotes cell adhesion by mediating homophilic interactions via its extracellular N-terminal adhesion motif (N-NAM). Also involved in striated muscle growth and differentiation. In Danio rerio (Zebrafish), this protein is Ninjurin-1.